The following is a 402-amino-acid chain: Nicotinate phosphoribosyltransferase (402 aa).

His224 is modified (phosphohistidine; by autocatalysis).

The protein belongs to the NAPRTase family. Transiently phosphorylated on a His residue during the reaction cycle. Phosphorylation strongly increases the affinity for substrates and increases the rate of nicotinate D-ribonucleotide production. Dephosphorylation regenerates the low-affinity form of the enzyme, leading to product release.

It catalyses the reaction nicotinate + 5-phospho-alpha-D-ribose 1-diphosphate + ATP + H2O = nicotinate beta-D-ribonucleotide + ADP + phosphate + diphosphate. Its pathway is cofactor biosynthesis; NAD(+) biosynthesis; nicotinate D-ribonucleotide from nicotinate: step 1/1. Catalyzes the synthesis of beta-nicotinate D-ribonucleotide from nicotinate and 5-phospho-D-ribose 1-phosphate at the expense of ATP. The polypeptide is Nicotinate phosphoribosyltransferase (Neisseria meningitidis serogroup A / serotype 4A (strain DSM 15465 / Z2491)).